Consider the following 409-residue polypeptide: MAGWPAAEAAGALVVAILAAAAGGAAGKTTIEPCAGADTCAALLGYTLYADMKVSEVAALFGADPRAVLAANALDFASPGAANRILPAGLPLRVPTRCACSDGVRKSVAVRYSARPADTLASVADVVFAGLASADQIRTANGLSAEDPDAPLDAGATLVVPLPCACFNSTDNNLPAVYLSYVVRVGDTVQSIAATHATTVTDISNVNAMGSPIVAPGDILAIPLPACASMFPNSASDYGLLVANGTYALTAGNCVQCSCGPGDLKLYCTPASLTASCSSMQCPNSNLMLGNVTAQSTSGGCNVSSCSYAGLVNGTIATSLSSGLQPTCPGPHQFPPLRATPIAVNQGSYLAPSPAPGAGEAGGDIPGFPGSSNVSPANGPSGSVSQAASVNRPHQIVALILSVALYFQM.

The N-terminal stretch at 1–27 (MAGWPAAEAAGALVVAILAAAAGGAAG) is a signal peptide. 4 disulfide bridges follow: Cys-34-Cys-100, Cys-40-Cys-166, Cys-98-Cys-164, and Cys-100-Cys-166. The 51-residue stretch at 110-160 (VRYSARPADTLASVADVVFAGLASADQIRTANGLSAEDPDAPLDAGATLVV) folds into the LysM 1 domain. Asn-168 is a glycosylation site (N-linked (GlcNAc...) asparagine). Positions 179–222 (LSYVVRVGDTVQSIAATHATTVTDISNVNAMGSPIVAPGDILAI) constitute a LysM 2 domain. Intrachain disulfides connect Cys-227-Cys-259 and Cys-254-Cys-282. Asn-244 is a glycosylation site (N-linked (GlcNAc...) asparagine). 3 N-linked (GlcNAc...) asparagine glycosylation sites follow: Asn-291, Asn-302, and Asn-313. A disordered region spans residues 353–387 (SPAPGAGEAGGDIPGFPGSSNVSPANGPSGSVSQA). Residues 370 to 387 (GSSNVSPANGPSGSVSQA) are compositionally biased toward polar residues. The GPI-anchor amidated alanine moiety is linked to residue Ala-387. Residues 388 to 409 (ASVNRPHQIVALILSVALYFQM) constitute a propeptide, removed in mature form.

Interacts with LYP4. Interacts with CERK1. Interacts with CEBIP. Expressed in roots and leaves.

The protein resides in the cell membrane. Functions in innate immunity. Functions as a pattern recognition receptor (PRR), sensing bacterial peptidoglycan (PGN) and fungal chitin at the cell surface. Involved in resistance against the bacterial pathogen Xanthomonas oryzae pv. oryzae (Xoo) and the fungal pathogen Magnaporthe oryzae. Binds PGN and fungal chitin in vitro. Involved in microbe-associated molecular patterns (MAMPs) perception and participates in the activation of defense genes against the bacterial pathogen Xanthomonas oryzae pv. oryzicola (Xoc) or the fungal pathogen Magnaporthe oryzae. This Oryza sativa subsp. japonica (Rice) protein is LysM domain-containing GPI-anchored protein LYP6.